The primary structure comprises 124 residues: uncharacterized protein (124 aa).

A helical membrane pass occupies residues 83 to 100 (VTCFSLYTICYRIVLIWA).

The protein localises to the membrane. This is an uncharacterized protein from Saccharomyces cerevisiae (strain ATCC 204508 / S288c) (Baker's yeast).